We begin with the raw amino-acid sequence, 223 residues long: ATP-dependent dethiobiotin synthetase BioD (223 aa).

Thr16 contacts Mg(2+). Lys37 is a catalytic residue. Ser41 contributes to the substrate binding site. Residues Asp50 and Glu111 each coordinate Mg(2+). ATP contacts are provided by residues Asp50, 111–114 (EGAG), and 171–172 (NR).

It belongs to the dethiobiotin synthetase family. As to quaternary structure, homodimer. Mg(2+) serves as cofactor.

It localises to the cytoplasm. It catalyses the reaction (7R,8S)-7,8-diammoniononanoate + CO2 + ATP = (4R,5S)-dethiobiotin + ADP + phosphate + 3 H(+). The protein operates within cofactor biosynthesis; biotin biosynthesis; biotin from 7,8-diaminononanoate: step 1/2. In terms of biological role, catalyzes a mechanistically unusual reaction, the ATP-dependent insertion of CO2 between the N7 and N8 nitrogen atoms of 7,8-diaminopelargonic acid (DAPA, also called 7,8-diammoniononanoate) to form a ureido ring. The protein is ATP-dependent dethiobiotin synthetase BioD of Anaeromyxobacter dehalogenans (strain 2CP-1 / ATCC BAA-258).